Reading from the N-terminus, the 902-residue chain is 3'-5' exonuclease DinG (902 aa).

One can recognise an Exonuclease domain in the interval 8-161; that stretch reads VVDLETTGNQ…DEDATTTAKL (154 aa). One can recognise a Helicase ATP-binding domain in the interval 241–496; that stretch reads KNVTQSLNLT…KAVDKLEQQR (256 aa). ATP is bound at residue 276–283; sequence APLGSGKS. Residues 448–451 carry the DEAH box motif; that stretch reads DEAH. One can recognise a Helicase C-terminal domain in the interval 714–883; the sequence is YIVEYITVTQ…HFKQRKGNIK (170 aa).

This sequence belongs to the helicase family. DinG subfamily. Type 2 sub-subfamily.

3'-5' exonuclease. This Staphylococcus epidermidis (strain ATCC 35984 / DSM 28319 / BCRC 17069 / CCUG 31568 / BM 3577 / RP62A) protein is 3'-5' exonuclease DinG.